A 449-amino-acid chain; its full sequence is Tubulin alpha-1 chain (449 aa).

GTP-binding residues include Gln-11, Glu-71, Ser-140, Gly-144, Thr-145, Thr-179, Asn-206, and Asn-228. Glu-71 contacts Mg(2+). Glu-254 is a catalytic residue.

It belongs to the tubulin family. As to quaternary structure, dimer of alpha and beta chains. A typical microtubule is a hollow water-filled tube with an outer diameter of 25 nm and an inner diameter of 15 nM. Alpha-beta heterodimers associate head-to-tail to form protofilaments running lengthwise along the microtubule wall with the beta-tubulin subunit facing the microtubule plus end conferring a structural polarity. Microtubules usually have 13 protofilaments but different protofilament numbers can be found in some organisms and specialized cells. Mg(2+) is required as a cofactor.

It localises to the cytoplasm. It is found in the cytoskeleton. It catalyses the reaction GTP + H2O = GDP + phosphate + H(+). In terms of biological role, tubulin is the major constituent of microtubules, a cylinder consisting of laterally associated linear protofilaments composed of alpha- and beta-tubulin heterodimers. Microtubules grow by the addition of GTP-tubulin dimers to the microtubule end, where a stabilizing cap forms. Below the cap, tubulin dimers are in GDP-bound state, owing to GTPase activity of alpha-tubulin. This chain is Tubulin alpha-1 chain (tubA), found in Emericella nidulans (strain FGSC A4 / ATCC 38163 / CBS 112.46 / NRRL 194 / M139) (Aspergillus nidulans).